A 403-amino-acid polypeptide reads, in one-letter code: Tryptophan synthase beta chain (403 aa).

Lys-96 is modified (N6-(pyridoxal phosphate)lysine).

Belongs to the TrpB family. As to quaternary structure, tetramer of two alpha and two beta chains. Pyridoxal 5'-phosphate serves as cofactor.

It carries out the reaction (1S,2R)-1-C-(indol-3-yl)glycerol 3-phosphate + L-serine = D-glyceraldehyde 3-phosphate + L-tryptophan + H2O. The protein operates within amino-acid biosynthesis; L-tryptophan biosynthesis; L-tryptophan from chorismate: step 5/5. Functionally, the beta subunit is responsible for the synthesis of L-tryptophan from indole and L-serine. The sequence is that of Tryptophan synthase beta chain from Ralstonia nicotianae (strain ATCC BAA-1114 / GMI1000) (Ralstonia solanacearum).